Here is a 360-residue protein sequence, read N- to C-terminus: Peptide chain release factor 1 (360 aa).

Glutamine 235 is subject to N5-methylglutamine. The disordered stretch occupies residues 284-313 (AKRQQAEASTRRNLLGSGDRSDRNRTYNFP).

It belongs to the prokaryotic/mitochondrial release factor family. Methylated by PrmC. Methylation increases the termination efficiency of RF1.

It localises to the cytoplasm. In terms of biological role, peptide chain release factor 1 directs the termination of translation in response to the peptide chain termination codons UAG and UAA. The chain is Peptide chain release factor 1 from Salmonella gallinarum (strain 287/91 / NCTC 13346).